Reading from the N-terminus, the 607-residue chain is Matrix metalloproteinase-16 (607 aa).

Residues 1 to 31 (MILLAFSSGRRLDFVHRSGVFFFQTLLWILC) form the signal peptide. The propeptide occupies 32 to 119 (ATVCGTEQYF…SSKFNIRRKR (88 aa)). An N-linked (GlcNAc...) asparagine glycan is attached at Asn-83. The Cysteine switch signature appears at 99 to 106 (PRCGVPDQ). Cys-101 is a binding site for Zn(2+). The Extracellular segment spans residues 120 to 564 (YALTGQKWQH…LDNTASTVKA (445 aa)). Residue Asp-183 coordinates Ca(2+). Zn(2+) contacts are provided by His-193 and Asp-195. The Ca(2+) site is built by Asp-200, Gly-201, Gly-203, and Phe-205. A Zn(2+)-binding site is contributed by His-208. Gly-215, Gly-217, and Asp-219 together coordinate Ca(2+). Zn(2+) is bound at residue His-221. Ca(2+) is bound by residues Asp-223 and Glu-226. His-246 contacts Zn(2+). Residue Glu-247 is part of the active site. Zn(2+)-binding residues include His-250 and His-256. A disordered region spans residues 281–340 (DDLQGIQKIYGPPDKIPPPTRPLPTVPPHRSVPPADPRKNDRPKPPRPPTGRPSYPGAKP). Pro residues predominate over residues 294–315 (DKIPPPTRPLPTVPPHRSVPPA). 4 Hemopexin repeats span residues 340-388 (PNIC…WRGL), 389-434 (PPSI…GNGI), 436-484 (PHGI…KGIP), and 485-532 (ESPQ…FMGC). The cysteines at positions 343 and 532 are disulfide-linked. A helical membrane pass occupies residues 565-585 (IAIVIPCILALCLLVLVYTVF). Over 586–607 (QFKRKGTPRHILYCKRSMQEWV) the chain is Cytoplasmic.

It belongs to the peptidase M10A family. As to quaternary structure, interacts with CSPG4 through CSPG4 chondroitin sulfate glycosaminoglycan. Requires Zn(2+) as cofactor. Ca(2+) is required as a cofactor. The precursor is cleaved by a furin endopeptidase. Strongly expressed in the lung, brain and smooth muscle cells. Weakly detectable in the spleen and liver and indetectable in the heart, skeletal muscle and kidney.

It localises to the cell membrane. Its subcellular location is the secreted. The protein localises to the extracellular space. It is found in the extracellular matrix. Endopeptidase that degrades various components of the extracellular matrix, such as collagen type III and fibronectin. Activates progelatinase A. Involved in the matrix remodeling of blood vessels. The short isoform efficiently converts progelatinase A to the intermediate form but not to the mature one. It has no effect on type I, II, IV and V collagen. However, upon interaction with CSPG4, it may be involved in degradation and invasion of type I collagen by melanoma cells. The protein is Matrix metalloproteinase-16 (Mmp16) of Rattus norvegicus (Rat).